A 378-amino-acid chain; its full sequence is Beta-1,3-galactosyltransferase 4 (378 aa).

Over 1 to 8 (MQLRLFRR) the chain is Cytoplasmic. A helical; Signal-anchor for type II membrane protein transmembrane segment spans residues 9–19 (LLLAALLLVIV). At 20-378 (WTLFGPSGLG…RCRAIAWLQS (359 aa)) the chain is on the lumenal side. Asn149 carries an N-linked (GlcNAc...) asparagine glycan.

The protein belongs to the glycosyltransferase 31 family. In terms of tissue distribution, highly expressed in heart, skeletal muscle and pancreas and, to a lesser extent, in brain, placenta, kidney, liver and lung.

It is found in the golgi apparatus membrane. The catalysed reaction is a ganglioside GM2 (d18:1(4E)) + UDP-alpha-D-galactose = a ganglioside GM1 (d18:1(4E)) + UDP + H(+). It catalyses the reaction a ganglioside GM2 + UDP-alpha-D-galactose = a ganglioside GM1 + UDP + H(+). It carries out the reaction a ganglioside GD2 (d18:1(4E)) + UDP-alpha-D-galactose = a ganglioside GD1b (d18:1(4E)) + UDP + H(+). The enzyme catalyses a ganglioside GA2 (d18:1(4E)) + UDP-alpha-D-galactose = a ganglioside GA1 (d18:1(4E)) + UDP + H(+). Its pathway is protein modification; protein glycosylation. Functionally, involved in GM1/GD1B/GA1 ganglioside biosynthesis. The polypeptide is Beta-1,3-galactosyltransferase 4 (Homo sapiens (Human)).